The primary structure comprises 86 residues: Cell division topological specificity factor (86 aa).

This sequence belongs to the MinE family.

In terms of biological role, prevents the cell division inhibition by proteins MinC and MinD at internal division sites while permitting inhibition at polar sites. This ensures cell division at the proper site by restricting the formation of a division septum at the midpoint of the long axis of the cell. This chain is Cell division topological specificity factor, found in Bordetella petrii (strain ATCC BAA-461 / DSM 12804 / CCUG 43448).